The primary structure comprises 702 residues: Ribosomal RNA large subunit methyltransferase K/L (702 aa).

In terms of domain architecture, THUMP spans 43-154 (LIYQSLMWSR…KETASIALDL (112 aa)).

This sequence belongs to the methyltransferase superfamily. RlmKL family.

It localises to the cytoplasm. It catalyses the reaction guanosine(2445) in 23S rRNA + S-adenosyl-L-methionine = N(2)-methylguanosine(2445) in 23S rRNA + S-adenosyl-L-homocysteine + H(+). It carries out the reaction guanosine(2069) in 23S rRNA + S-adenosyl-L-methionine = N(2)-methylguanosine(2069) in 23S rRNA + S-adenosyl-L-homocysteine + H(+). Specifically methylates the guanine in position 2445 (m2G2445) and the guanine in position 2069 (m7G2069) of 23S rRNA. This chain is Ribosomal RNA large subunit methyltransferase K/L, found in Salmonella gallinarum (strain 287/91 / NCTC 13346).